We begin with the raw amino-acid sequence, 578 residues long: Keratin, type II cytoskeletal 1b (578 aa).

The tract at residues 1–163 (MSHQFSSQSA…DPEIQRIKTQ (163 aa)) is head. Arg-95 is subject to Omega-N-methylarginine. The interval 164–200 (EREQIMVLNNKFASFIDKVRFLEQQNQVLQTKWELLQ) is coil 1A. An IF rod domain is found at 164-477 (EREQIMVLNN…QLLEGEESRM (314 aa)). The tract at residues 201–219 (QVNTSTGTNNLEPLLENYI) is linker 1. Residues 220–311 (GDLRRQVDLL…LFLTELSQVQ (92 aa)) form a coil 1B region. Positions 312–335 (THISDTNVILSMDNNRSLDLDSII) are linker 12. A coil 2 region spans residues 336–474 (DAVRTQYELI…TYRQLLEGEE (139 aa)). The interval 475-578 (SRMSGELQSH…TNTSHRRILE (104 aa)) is tail. Arg-523 bears the Omega-N-methylarginine mark. The span at 547–556 (GSYGGSGRSG) shows a compositional bias: gly residues. The disordered stretch occupies residues 547 to 578 (GSYGGSGRSGRGSSRVQIIQTSTNTSHRRILE). Over residues 562–571 (VQIIQTSTNT) the composition is skewed to polar residues.

The protein belongs to the intermediate filament family. In terms of processing, undergoes deimination of some arginine residues (citrullination). Expressed exclusively in skin.

This is Keratin, type II cytoskeletal 1b (KRT77) from Homo sapiens (Human).